A 224-amino-acid polypeptide reads, in one-letter code: tRNA (guanine-N(7)-)-methyltransferase (224 aa).

S-adenosyl-L-methionine is bound by residues glutamate 54, glutamate 79, glutamate 106, and aspartate 129. Aspartate 129 is a catalytic residue. Lysine 133 and aspartate 165 together coordinate substrate.

The protein belongs to the class I-like SAM-binding methyltransferase superfamily. TrmB family.

The enzyme catalyses guanosine(46) in tRNA + S-adenosyl-L-methionine = N(7)-methylguanosine(46) in tRNA + S-adenosyl-L-homocysteine. The protein operates within tRNA modification; N(7)-methylguanine-tRNA biosynthesis. Catalyzes the formation of N(7)-methylguanine at position 46 (m7G46) in tRNA. This is tRNA (guanine-N(7)-)-methyltransferase from Chlamydia abortus (strain DSM 27085 / S26/3) (Chlamydophila abortus).